A 502-amino-acid chain; its full sequence is 4,4'-diapophytoene desaturase (4,4'-diaponeurosporene-forming) (502 aa).

Residue 5-17 (VIGAGVTGLAAAA) participates in FAD binding.

Belongs to the carotenoid/retinoid oxidoreductase family. CrtN subfamily.

It catalyses the reaction 15-cis-4,4'-diapophytoene + 3 FAD + 3 H(+) = all-trans-4,4'-diaponeurosporene + 3 FADH2. Its pathway is carotenoid biosynthesis; staphyloxanthin biosynthesis; staphyloxanthin from farnesyl diphosphate: step 2/5. Its function is as follows. Involved in the biosynthesis of the yellow-orange carotenoid staphyloxanthin, which plays a role in the virulence via its protective function against oxidative stress. Catalyzes three successive dehydrogenation reactions that lead to the introduction of three double bonds into 4,4'-diapophytoene (dehydrosqualene), with 4,4'-diapophytofluene and 4,4'-diapo-zeta-carotene as intermediates, and 4,4'-diaponeurosporene (the major deep-yellow pigment in staphylococci strains) as the end product. This Staphylococcus aureus (strain bovine RF122 / ET3-1) protein is 4,4'-diapophytoene desaturase (4,4'-diaponeurosporene-forming).